The following is a 1715-amino-acid chain: Rho guanine nucleotide exchange factor TIAM2 (1715 aa).

Composition is skewed to polar residues over residues 1–22 and 218–229; these read MGNSESQYTFQGSKNHSNTVTG and GSPSSQRPSPTD. Disordered stretches follow at residues 1–27, 174–249, 263–294, and 385–418; these read MGNSESQYTFQGSKNHSNTVTGAKQKP, FHNG…WYDS, SFLAPSTPDPSLPSSFPPSDTKKPFNQSSSLS, and TGSLSRKKRKLQEPRSMEGSEYFDSHSDGLNAEG. Gly2 carries N-myristoyl glycine lipidation. A compositionally biased stretch (low complexity) spans 235 to 245; that stretch reads SKGSSLSSESS. Residues 395–411 show a composition bias toward basic and acidic residues; sequence LQEPRSMEGSEYFDSHS. Residues 504–618 enclose the PH 1 domain; sequence VVRKAGWLFF…WVTAIHSACA (115 aa). Residues 665-692 adopt a coiled-coil conformation; the sequence is PKNRKAIENQIRQWEQNLEKFHMDLFRM. Residues 831-902 enclose the RBD domain; it reads VQTYVHFQDN…YMQEQVYDEI (72 aa). A PDZ domain is found at 911–997; sequence DVQLTKTGDM…GLTLVARPVT (87 aa). A disordered region spans residues 1092–1113; it reads THTNSMEAPTESHDPPPRPLAR. The DH domain maps to 1120-1314; that stretch reads RLRKVIQELV…EKVASHINEM (195 aa). Residues 1347-1478 form the PH 2 domain; it reads LLMHSTVSWL…KVIRSILREN (132 aa). The disordered stretch occupies residues 1515-1582; the sequence is SLKGLRTSSS…EGLAEFPDGL (68 aa). Residues 1522-1532 show a composition bias toward low complexity; sequence SSSSEWPSEPS. Residues 1533–1552 show a composition bias toward polar residues; the sequence is KGNSLDSDECSLSSGTQSSG. Basic and acidic residues predominate over residues 1557-1572; the sequence is ESRRDSKSTELEKDAQ. Ser1604 is modified (phosphoserine). Phosphothreonine is present on Thr1662.

Belongs to the TIAM family. Interacts with MAP1A, MAP1B, PARP1 and YWHAE. Interacts with CD44, PARD3 and MAPK8IP2. Post-translationally, phosphorylated on serine and threonine residues. Phosphorylated on Thr-1662 by Rho-kinase. Its phosphorylation by Rho-kinase inhibits its guanine nucleotide exchange activity, its interaction with MAP1A, MAP1B, PARP1 and YWHAE and reduces its ability to promote neurite growth. As to expression, expressed in fetal brain (at protein level). Expressed in the olfactory bulb, cortical plate of the cerebral cortex, caudate putamen, hippocampus, ependymal cells of the lateral surface of the lateral ventricles of the brain. Weakly expressed in heart, lung, liver, skeletal muscle, kidney and testis.

It is found in the cytoplasm. The protein resides in the cell projection. Its subcellular location is the lamellipodium. The protein localises to the filopodium. It localises to the growth cone. It is found in the neuron projection. The protein resides in the perikaryon. Its function is as follows. Modulates the activity of RHO-like proteins and connects extracellular signals to cytoskeletal activities. Acts as a GDP-dissociation stimulator protein that stimulates the GDP-GTP exchange activity of RHO-like GTPases and activates them. Activates specifically RAC1, but not CDC42 and RHOA. Mediates extracellular laminin signals to activate Rac1, contributing to neurite growth. Involved in lamellipodial formation and advancement of the growth cone of embryonic hippocampal neurons. Promotes migration of neurons in the cerebral cortex. When overexpressed, induces membrane ruffling accompanied by the accumulation of actin filaments along the altered plasma membrane. In Mus musculus (Mouse), this protein is Rho guanine nucleotide exchange factor TIAM2.